Consider the following 170-residue polypeptide: Large ribosomal subunit protein uL10 (170 aa).

This sequence belongs to the universal ribosomal protein uL10 family. In terms of assembly, part of the ribosomal stalk of the 50S ribosomal subunit. The N-terminus interacts with L11 and the large rRNA to form the base of the stalk. The C-terminus forms an elongated spine to which L12 dimers bind in a sequential fashion forming a multimeric L10(L12)X complex.

Functionally, forms part of the ribosomal stalk, playing a central role in the interaction of the ribosome with GTP-bound translation factors. The polypeptide is Large ribosomal subunit protein uL10 (Fusobacterium nucleatum subsp. nucleatum (strain ATCC 25586 / DSM 15643 / BCRC 10681 / CIP 101130 / JCM 8532 / KCTC 2640 / LMG 13131 / VPI 4355)).